The sequence spans 491 residues: Probable glycine dehydrogenase (decarboxylating) subunit 2 (491 aa).

An N6-(pyridoxal phosphate)lysine modification is found at Lys264.

This sequence belongs to the GcvP family. C-terminal subunit subfamily. In terms of assembly, the glycine cleavage system is composed of four proteins: P, T, L and H. In this organism, the P 'protein' is a heterodimer of two subunits. Pyridoxal 5'-phosphate serves as cofactor.

The enzyme catalyses N(6)-[(R)-lipoyl]-L-lysyl-[glycine-cleavage complex H protein] + glycine + H(+) = N(6)-[(R)-S(8)-aminomethyldihydrolipoyl]-L-lysyl-[glycine-cleavage complex H protein] + CO2. The glycine cleavage system catalyzes the degradation of glycine. The P protein binds the alpha-amino group of glycine through its pyridoxal phosphate cofactor; CO(2) is released and the remaining methylamine moiety is then transferred to the lipoamide cofactor of the H protein. The polypeptide is Probable glycine dehydrogenase (decarboxylating) subunit 2 (Coxiella burnetii (strain CbuG_Q212) (Coxiella burnetii (strain Q212))).